We begin with the raw amino-acid sequence, 303 residues long: MMDVSGVGFPSKVPWKKMSAEELENQYCPSRWVVRLGAEEALRTYSQIGIEATTRARATRKSLLHVPYGDGEGEKVDIYFPDESSEALPFFLFFHGGYWQSGSKDESAFMVHPLTAQGVAVVIVAYGIAPKGTLDHMVDQVTRSVAFVQKRYPSNKGIYLCGHSAGAHLAAMMLLADWTKHGVTPNLRGFFLVSGVFDLEPIVYTSQNVALQLTLEDAQRNSPQLKVAQAQPVDPTCRVLVVVGQFDSPEFHRQSWEFYQTLCQGEWKASFEELHDVDHFEIVENLTQKDNVLTQIILKTIFQ.

The HGGXW signature appears at 95–99 (HGGYW). Serine 164 serves as the catalytic Nucleophile. Active-site residues include aspartate 247 and histidine 279.

It belongs to the kynurenine formamidase family. Homodimer.

It is found in the cytoplasm. Its subcellular location is the cytosol. The protein localises to the nucleus. The enzyme catalyses N-formyl-L-kynurenine + H2O = L-kynurenine + formate + H(+). Its pathway is amino-acid degradation; L-tryptophan degradation via kynurenine pathway; L-kynurenine from L-tryptophan: step 2/2. Its function is as follows. Catalyzes the hydrolysis of N-formyl-L-kynurenine to L-kynurenine, the second step in the kynurenine pathway of tryptophan degradation. Kynurenine may be further oxidized to nicotinic acid, NAD(H) and NADP(H). Required for elimination of toxic metabolites. The polypeptide is Kynurenine formamidase (Homo sapiens (Human)).